The sequence spans 341 residues: Retinol dehydrogenase 10 (341 aa).

Residues 3 to 23 (IVVEFFVVTFKVLWAFVLAAA) form a helical; Signal-anchor membrane-spanning segment. NADP(+) is bound at residue 40–64 (LITGAGSGLGRLFALEFARRRALLV). Substrate is bound at residue serine 197. Tyrosine 210 functions as the Proton acceptor in the catalytic mechanism.

Belongs to the short-chain dehydrogenases/reductases (SDR) family. Detected in retinal pigment epithelium (at protein level). Detected in retina, retinal pigment epithelium, and at lower levels in cornea, liver, kidney, pancreas, lung, brain and skeletal muscle.

The protein localises to the microsome membrane. It localises to the endoplasmic reticulum membrane. The catalysed reaction is all-trans-retinol + NADP(+) = all-trans-retinal + NADPH + H(+). Its pathway is cofactor metabolism; retinol metabolism. In terms of biological role, retinol dehydrogenase with a clear preference for NADP. Converts all-trans-retinol to all-trans-retinal. Has no detectable activity towards 11-cis-retinol, 9-cis-retinol and 13-cis-retinol. This chain is Retinol dehydrogenase 10 (RDH10), found in Bos taurus (Bovine).